Consider the following 248-residue polypeptide: Ubiquinone/menaquinone biosynthesis C-methyltransferase UbiE (248 aa).

Residues S68 and D92 each coordinate S-adenosyl-L-methionine.

This sequence belongs to the class I-like SAM-binding methyltransferase superfamily. MenG/UbiE family.

It catalyses the reaction a 2-demethylmenaquinol + S-adenosyl-L-methionine = a menaquinol + S-adenosyl-L-homocysteine + H(+). The enzyme catalyses a 2-methoxy-6-(all-trans-polyprenyl)benzene-1,4-diol + S-adenosyl-L-methionine = a 5-methoxy-2-methyl-3-(all-trans-polyprenyl)benzene-1,4-diol + S-adenosyl-L-homocysteine + H(+). The protein operates within quinol/quinone metabolism; menaquinone biosynthesis; menaquinol from 1,4-dihydroxy-2-naphthoate: step 2/2. Its pathway is cofactor biosynthesis; ubiquinone biosynthesis. Its function is as follows. Methyltransferase required for the conversion of demethylmenaquinol (DMKH2) to menaquinol (MKH2) and the conversion of 2-polyprenyl-6-methoxy-1,4-benzoquinol (DDMQH2) to 2-polyprenyl-3-methyl-6-methoxy-1,4-benzoquinol (DMQH2). In Rickettsia conorii (strain ATCC VR-613 / Malish 7), this protein is Ubiquinone/menaquinone biosynthesis C-methyltransferase UbiE.